The primary structure comprises 537 residues: Phosphoenolpyruvate carboxykinase (ATP) (537 aa).

3 residues coordinate substrate: arginine 61, tyrosine 195, and lysine 201. ATP is bound by residues lysine 201, histidine 220, and 236–244 (GLSGTGKTT). The Mn(2+) site is built by lysine 201 and histidine 220. Position 257 (aspartate 257) interacts with Mn(2+). 3 residues coordinate ATP: glutamate 285, arginine 323, and threonine 448. Arginine 323 provides a ligand contact to substrate.

It belongs to the phosphoenolpyruvate carboxykinase (ATP) family. Mn(2+) is required as a cofactor.

The protein resides in the cytoplasm. It carries out the reaction oxaloacetate + ATP = phosphoenolpyruvate + ADP + CO2. It functions in the pathway carbohydrate biosynthesis; gluconeogenesis. Its function is as follows. Involved in the gluconeogenesis. Catalyzes the conversion of oxaloacetate (OAA) to phosphoenolpyruvate (PEP) through direct phosphoryl transfer between the nucleoside triphosphate and OAA. The protein is Phosphoenolpyruvate carboxykinase (ATP) of Rhodopseudomonas palustris (strain HaA2).